We begin with the raw amino-acid sequence, 326 residues long: MDPSTTILRVKRKRGTDPADALLLACKRIRPEATAAQPSDESEPEPQEPKIENSVFKLVATVVSQDAPVQPHVREALARPRLAHHALRPSQGSSQRIIGDLRSVKWSTRREERYRILSSHRAGLPSEPAPAGGGGEENHDSHAESRDGLPLGEVQVFDILHEEEDVKVPGKMVVSDPETILCNSVKMIREKLSVSGAGLGTEHREKEDDYVYDLYYQETATPGWIQDILSVRPYSQEGELVPDEVAWEEEVYEDEDDENAEANWRNDYPEESSEGDSEGEERYGGCWSEEHSYSRRSRECYRRDMIDELENDKDEDDEEREYNDSD.

Disordered stretches follow at residues 30-52 (RPEA…PKIE), 120-147 (HRAG…ESRD), 252-297 (YEDE…SRRS), and 307-326 (DELE…NDSD). The segment covering 136 to 147 (EENHDSHAESRD) has biased composition (basic and acidic residues). The span at 269–279 (PEESSEGDSEG) shows a compositional bias: acidic residues. Over residues 280–297 (EERYGGCWSEEHSYSRRS) the composition is skewed to basic and acidic residues.

This sequence belongs to the IWR1/SLC7A6OS family.

It is found in the cytoplasm. Its subcellular location is the nucleus. In terms of biological role, directs RNA polymerase II nuclear import. The protein is Probable RNA polymerase II nuclear localization protein SLC7A6OS (slc7a6os) of Danio rerio (Zebrafish).